The sequence spans 428 residues: Histidine--tRNA ligase (428 aa).

Belongs to the class-II aminoacyl-tRNA synthetase family. Homodimer.

Its subcellular location is the cytoplasm. It carries out the reaction tRNA(His) + L-histidine + ATP = L-histidyl-tRNA(His) + AMP + diphosphate + H(+). In Lactobacillus johnsonii (strain CNCM I-12250 / La1 / NCC 533), this protein is Histidine--tRNA ligase.